The following is an 817-amino-acid chain: Neurabin-2 (817 aa).

Actin-binding regions lie at residues 1-154 and 164-283; these read MMKT…FERS and EAAA…QHRV. Residues 1 to 165 form a disordered region; the sequence is MMKTEPRGPG…PAAAGGDKEA (165 aa). Phosphoserine is present on residues Ser-15 and Ser-17. A compositionally biased stretch (basic residues) spans 44–58; the sequence is GAHHKKYGSNVHRIK. Phosphoserine occurs at positions 94, 100, and 116. An interaction with D(2) dopamine receptor region spans residues 100–371; the sequence is SLNENVDHSA…PERGVGNGRA (272 aa). The span at 131–141 shows a compositional bias: pro residues; the sequence is SAQPAPPPHPP. The segment at 169–255 is interaction with ADRA2A, ADRA2B and ADRA2C; it reads RLLRQERAGL…KRSRVFQPPP (87 aa). Ser-192 carries the post-translational modification Phosphoserine. Thr-193 is modified (phosphothreonine). Phosphoserine is present on Ser-205. At Thr-207 the chain carries Phosphothreonine. Positions 216–447 are disordered; sequence EKADSRTGLH…SEEEDPAPSR (232 aa). The segment covering 252-261 has biased composition (pro residues); that stretch reads QPPPPPPPAP. The span at 291-302 shows a compositional bias: basic and acidic residues; the sequence is KPREVRKIKPVE. Residues 333 to 342 are compositionally biased toward low complexity; it reads STVATAASPA. Positions 344–356 are enriched in basic and acidic residues; that stretch reads EEPKAQAAPEKEA. Residues 410–425 are compositionally biased toward acidic residues; it reads LEEDDEDDEEDGEPPY. Residues 417 to 494 are interaction with protein phosphatase 1; it reads DEEDGEPPYE…LEKRVERLEL (78 aa). Phosphoserine is present on Ser-438. The PP1-binding motif motif lies at 447–451; that stretch reads RKIHF. Positions 480 to 525 are interaction with RGS2; sequence SAEYELEKRVERLELFPVELEKDSEGLGISIIGMGAGADMGLEKLG. The 89-residue stretch at 496–584 folds into the PDZ domain; it reads PVELEKDSEG…RVRFMIGRER (89 aa). An interaction with TGN38 region spans residues 595–816; it reads IQQTLEQERW…NLQTLRNSNS (222 aa). Ser-658 carries the phosphoserine modification. The stretch at 671–788 forms a coiled coil; sequence FKELQIKHAV…QRRVLEESEL (118 aa).

Interacts with DCLK2. Possibly exists as a homodimer, homotrimer or a homotetramer. Interacts with F-actin, PPP1CA, neurabin-1, TGN38 and D(2) dopamine receptor. Interacts with RGS1, RGS2, RGS4, RGS19 and ADRA1B, ADRA2A, ADRA2B, ADRA2C, CDKN2A, PPP1R2, RASGFR1 and TIAM1. Interacts (via C-terminus) with SPATA13 (via C-terminal tail). Interacts with ADRA2B. Post-translationally, stimulation of D1 (but not D2) dopamine receptors induces Ser-94 phosphorylation. Dephosphorylation of Ser-94 is mediated mainly by PP1 and to a lesser extent by PP2A. Phosphorylation of spinophilin disrupts its association with F-actin, but does not affect its binding to PP1.

Its subcellular location is the cytoplasm. The protein localises to the cytoskeleton. It is found in the nucleus. The protein resides in the cell projection. It localises to the dendritic spine. Its subcellular location is the postsynaptic density. The protein localises to the synapse. It is found in the cell junction. The protein resides in the adherens junction. It localises to the cell membrane. Its subcellular location is the lamellipodium. The protein localises to the filopodium. It is found in the ruffle membrane. Functionally, seems to act as a scaffold protein in multiple signaling pathways. Modulates excitatory synaptic transmission and dendritic spine morphology. Binds to actin filaments (F-actin) and shows cross-linking activity. Binds along the sides of the F-actin. May play an important role in linking the actin cytoskeleton to the plasma membrane at the synaptic junction. Believed to target protein phosphatase 1/PP1 to dendritic spines, which are rich in F-actin, and regulates its specificity toward ion channels and other substrates, such as AMPA-type and NMDA-type glutamate receptors. Plays a role in regulation of G-protein coupled receptor signaling, including dopamine D2 receptors and alpha-adrenergic receptors. May establish a signaling complex for dopaminergic neurotransmission through D2 receptors by linking receptors downstream signaling molecules and the actin cytoskeleton. Binds to ADRA1B and RGS2 and mediates regulation of ADRA1B signaling. May confer to Rac signaling specificity by binding to both, RacGEFs and Rac effector proteins. Probably regulates p70 S6 kinase activity by forming a complex with TIAM1. Required for hepatocyte growth factor (HGF)-induced cell migration. This is Neurabin-2 (PPP1R9B) from Homo sapiens (Human).